Here is a 363-residue protein sequence, read N- to C-terminus: UDP-N-acetylglucosamine--N-acetylmuramyl-(pentapeptide) pyrophosphoryl-undecaprenol N-acetylglucosamine transferase (363 aa).

Residues 10 to 12 (TGG), N124, S195, I249, and Q294 contribute to the UDP-N-acetyl-alpha-D-glucosamine site.

Belongs to the glycosyltransferase 28 family. MurG subfamily.

It localises to the cell membrane. The catalysed reaction is Mur2Ac(oyl-L-Ala-gamma-D-Glu-L-Lys-D-Ala-D-Ala)-di-trans,octa-cis-undecaprenyl diphosphate + UDP-N-acetyl-alpha-D-glucosamine = beta-D-GlcNAc-(1-&gt;4)-Mur2Ac(oyl-L-Ala-gamma-D-Glu-L-Lys-D-Ala-D-Ala)-di-trans,octa-cis-undecaprenyl diphosphate + UDP + H(+). It functions in the pathway cell wall biogenesis; peptidoglycan biosynthesis. Functionally, cell wall formation. Catalyzes the transfer of a GlcNAc subunit on undecaprenyl-pyrophosphoryl-MurNAc-pentapeptide (lipid intermediate I) to form undecaprenyl-pyrophosphoryl-MurNAc-(pentapeptide)GlcNAc (lipid intermediate II). The protein is UDP-N-acetylglucosamine--N-acetylmuramyl-(pentapeptide) pyrophosphoryl-undecaprenol N-acetylglucosamine transferase of Leuconostoc mesenteroides subsp. mesenteroides (strain ATCC 8293 / DSM 20343 / BCRC 11652 / CCM 1803 / JCM 6124 / NCDO 523 / NBRC 100496 / NCIMB 8023 / NCTC 12954 / NRRL B-1118 / 37Y).